We begin with the raw amino-acid sequence, 128 residues long: Ribonuclease P protein component (128 aa).

The protein belongs to the RnpA family. As to quaternary structure, consists of a catalytic RNA component (M1 or rnpB) and a protein subunit.

The catalysed reaction is Endonucleolytic cleavage of RNA, removing 5'-extranucleotides from tRNA precursor.. In terms of biological role, RNaseP catalyzes the removal of the 5'-leader sequence from pre-tRNA to produce the mature 5'-terminus. It can also cleave other RNA substrates such as 4.5S RNA. The protein component plays an auxiliary but essential role in vivo by binding to the 5'-leader sequence and broadening the substrate specificity of the ribozyme. The sequence is that of Ribonuclease P protein component from Parasynechococcus marenigrum (strain WH8102).